Here is a 318-residue protein sequence, read N- to C-terminus: Biotin synthase (318 aa).

A Radical SAM core domain is found at 36 to 258; it reads HDPREVQLCT…VATTRILFPD (223 aa). Residues cysteine 54, cysteine 58, and cysteine 61 each coordinate [4Fe-4S] cluster. 4 residues coordinate [2Fe-2S] cluster: cysteine 98, cysteine 130, cysteine 190, and arginine 262.

Belongs to the radical SAM superfamily. Biotin synthase family. Homodimer. The cofactor is [4Fe-4S] cluster. It depends on [2Fe-2S] cluster as a cofactor.

It carries out the reaction (4R,5S)-dethiobiotin + (sulfur carrier)-SH + 2 reduced [2Fe-2S]-[ferredoxin] + 2 S-adenosyl-L-methionine = (sulfur carrier)-H + biotin + 2 5'-deoxyadenosine + 2 L-methionine + 2 oxidized [2Fe-2S]-[ferredoxin]. It functions in the pathway cofactor biosynthesis; biotin biosynthesis; biotin from 7,8-diaminononanoate: step 2/2. In terms of biological role, catalyzes the conversion of dethiobiotin (DTB) to biotin by the insertion of a sulfur atom into dethiobiotin via a radical-based mechanism. This Gloeobacter violaceus (strain ATCC 29082 / PCC 7421) protein is Biotin synthase.